The following is a 141-amino-acid chain: Glutamyl-tRNA(Gln) amidotransferase subunit C, chloroplastic/mitochondrial (141 aa).

This sequence belongs to the GatC family. In terms of assembly, subunit of the heterotrimeric GatCAB amidotransferase (AdT) complex, composed of A, B and C subunits.

It localises to the mitochondrion. The protein resides in the plastid. Its subcellular location is the chloroplast. The catalysed reaction is L-glutamyl-tRNA(Gln) + L-glutamine + ATP + H2O = L-glutaminyl-tRNA(Gln) + L-glutamate + ADP + phosphate + H(+). Allows the formation of correctly charged Gln-tRNA(Gln) through the transamidation of misacylated Glu-tRNA(Gln) in chloroplasts and mitochondria. The reaction takes place in the presence of glutamine and ATP through an activated gamma-phospho-Glu-tRNA(Gln). The chain is Glutamyl-tRNA(Gln) amidotransferase subunit C, chloroplastic/mitochondrial from Populus trichocarpa (Western balsam poplar).